The following is a 257-amino-acid chain: NAD-capped RNA hydrolase NudC (257 aa).

Residues K27 and R71 each contribute to the substrate site. Residues C100 and C103 each coordinate Zn(2+). Residue E113 participates in substrate binding. Residues C118 and C121 each contribute to the Zn(2+) site. Residue Y126 coordinates substrate. Residues P127 to I251 form the Nudix hydrolase domain. 3 residues coordinate a divalent metal cation: A160, E176, and E180. The Nudix box signature appears at G161–N182. Q194 to S201 is a binding site for substrate. E221 contacts a divalent metal cation. A substrate-binding site is contributed by A243.

This sequence belongs to the Nudix hydrolase family. NudC subfamily. As to quaternary structure, homodimer. Mg(2+) serves as cofactor. The cofactor is Mn(2+). It depends on Zn(2+) as a cofactor.

It carries out the reaction a 5'-end NAD(+)-phospho-ribonucleoside in mRNA + H2O = a 5'-end phospho-adenosine-phospho-ribonucleoside in mRNA + beta-nicotinamide D-ribonucleotide + 2 H(+). It catalyses the reaction NAD(+) + H2O = beta-nicotinamide D-ribonucleotide + AMP + 2 H(+). The catalysed reaction is NADH + H2O = reduced beta-nicotinamide D-ribonucleotide + AMP + 2 H(+). In terms of biological role, mRNA decapping enzyme that specifically removes the nicotinamide adenine dinucleotide (NAD) cap from a subset of mRNAs by hydrolyzing the diphosphate linkage to produce nicotinamide mononucleotide (NMN) and 5' monophosphate mRNA. The NAD-cap is present at the 5'-end of some mRNAs and stabilizes RNA against 5'-processing. Has preference for mRNAs with a 5'-end purine. Catalyzes the hydrolysis of a broad range of dinucleotide pyrophosphates. The polypeptide is NAD-capped RNA hydrolase NudC (Photorhabdus laumondii subsp. laumondii (strain DSM 15139 / CIP 105565 / TT01) (Photorhabdus luminescens subsp. laumondii)).